We begin with the raw amino-acid sequence, 201 residues long: Natural cytotoxicity triggering receptor 3 (201 aa).

Positions 1–18 (MAWMLLLILIMVHPGSCA) are cleaved as a signal peptide. The Ig-like domain occupies 19–126 (LWVSQPPEIR…VGTGNGTRLV (108 aa)). Topologically, residues 19-135 (LWVSQPPEIR…VVEKEHPQLG (117 aa)) are extracellular. A disulfide bridge links Cys-39 with Cys-108. Asn-42 and Asn-121 each carry an N-linked (GlcNAc...) asparagine glycan. A helical membrane pass occupies residues 136-156 (AGTVLLLRAGFYAVSFLSVAV). The Cytoplasmic portion of the chain corresponds to 157-201 (GSTVYYQGKCLTWKGPRRQLPAVVPAPLPPPCGSSAHLLPPVPGG).

The protein belongs to the natural cytotoxicity receptor (NCR) family. As to quaternary structure, homodimer in the unliganted form. Interacts with CD3Z. Interacts with and is activated by binding to NCR3LG1. Interacts with and is activated by binding to BAG6. Interacts with and is inhibited by binding to LGALS3. Selectively expressed by all resting and activated NK cells and weakly expressed in spleen.

It localises to the cell membrane. Cell membrane receptor of natural killer/NK cells that is activated by binding of extracellular ligands including BAG6 and NCR3LG1. Stimulates NK cells cytotoxicity toward neighboring cells producing these ligands. It controls, for instance, NK cells cytotoxicity against tumor cells. Engagement of NCR3 by BAG6 also promotes myeloid dendritic cells (DC) maturation, both through killing DCs that did not acquire a mature phenotype, and inducing the release by NK cells of TNFA and IFNG which promote DC maturation. The protein is Natural cytotoxicity triggering receptor 3 of Homo sapiens (Human).